Reading from the N-terminus, the 83-residue chain is Type 3 secretion system needle filament protein (83 aa).

It belongs to the SctF family. As to quaternary structure, the core secretion machinery of the T3SS is composed of approximately 20 different proteins, including cytoplasmic components, a base, an export apparatus and a needle. This subunit polymerizes and forms the helical needle filament. Interacts with the needle tip protein IpaD/SctA. Interacts with the export apparatus components SpaP/SctR, SpaQ/SctS and SpaR/SctT.

The protein resides in the secreted. Its subcellular location is the cell surface. Its function is as follows. Component of the type III secretion system (T3SS), also called injectisome, which is used to inject bacterial effector proteins into eukaryotic host cells. MxiH/SctF forms the external needle filament that protrudes from the bacterial surface. In terms of biological role, during infection, can induce innate immune responses. The needle proteins interact with host TLR2 or TLR4, and induce signaling by NF-kappa-B and/or AP-1. This activation is MyD88 dependent and results in increased expression of cytokines, including TNF-alpha, IL-6 and IL-8. The protein is Type 3 secretion system needle filament protein of Shigella flexneri.